Consider the following 249-residue polypeptide: Ribonuclease HII (249 aa).

Residues 1 to 19 (MAPRPKAPPQPAEPDPALP) show a composition bias toward pro residues. Residues 1-31 (MAPRPKAPPQPAEPDPALPRPRGRPPKAGAV) are disordered. Residues 52 to 240 (APVAGADEVG…VREQQLGLFP (189 aa)) enclose the RNase H type-2 domain. A divalent metal cation contacts are provided by Asp-58, Glu-59, and Asp-149.

The protein belongs to the RNase HII family. Requires Mn(2+) as cofactor. Mg(2+) serves as cofactor.

The protein localises to the cytoplasm. The catalysed reaction is Endonucleolytic cleavage to 5'-phosphomonoester.. Its function is as follows. Endonuclease that specifically degrades the RNA of RNA-DNA hybrids. This is Ribonuclease HII from Xanthobacter autotrophicus (strain ATCC BAA-1158 / Py2).